A 2176-amino-acid chain; its full sequence is Protein eyes shut (2176 aa).

Topologically, residues 1-122 (MSNVHQFDTQ…NPNILLPTLR (122 aa)) are cytoplasmic. The chain crosses the membrane as a helical span at residues 123 to 143 (ILARGLLLPALILAILVGSSQ). In terms of domain architecture, EGF-like 1 spans 144-180 (AGFACLSNPCVFGVCIDGLNSSYSCYCIDGYTGIQCQ). At 144–2176 (AGFACLSNPC…DLHGDEPLTV (2033 aa)) the chain is on the extracellular side. 21 disulfide bridges follow: Cys148-Cys158, Cys153-Cys168, Cys170-Cys179, Cys186-Cys197, Cys191-Cys206, Cys208-Cys217, Cys224-Cys235, Cys229-Cys244, Cys246-Cys255, Cys262-Cys276, Cys270-Cys286, Cys288-Cys297, Cys304-Cys315, Cys309-Cys324, Cys326-Cys335, Cys342-Cys353, Cys347-Cys362, Cys364-Cys373, Cys380-Cys392, Cys386-Cys401, and Cys403-Cys412. Asn163 carries N-linked (GlcNAc...) asparagine glycosylation. The 37-residue stretch at 182-218 (NWDECWSSPCQNGGTCVDGVAYYNCTCPEGFSGSNCE) folds into the EGF-like 2; calcium-binding domain. A glycan (N-linked (GlcNAc...) asparagine) is linked at Asn205. Residues 220–256 (NVDECMSNPCQNGGLCRDRTNGYICTCQPGYLGSHCE) form the EGF-like 3; calcium-binding domain. The region spanning 258-298 (DVAVCETGTGARCQHGGECIEGPGLEFTCDCPAGWHGRICQ) is the EGF-like 4 domain. The EGF-like 5; calcium-binding domain occupies 300-336 (EINECASSPCQNGGVCVDKLAAYACACPMGYTGINCE). In terms of domain architecture, EGF-like 6 spans 338 to 374 (EILICADNPCQNNALCLMEEGVPTCYCVPDYHGEKCE). Residues 376 to 413 (QYDECQLGPRCMNGGVCIDGVDTFSCSCPPLLTGMLCE) form the EGF-like 7; calcium-binding domain. A glycan (N-linked (GlcNAc...) asparagine) is linked at Asn425. Low complexity-rich tracts occupy residues 429–447 (PATQSPPRRTTTTSTMAPP) and 482–502 (VTSVLSPSSSSSSSEEGVSVE). Disordered stretches follow at residues 429–465 (PATQSPPRRTTTTSTMAPPTVRPVTPPETTVSPSRAS), 482–639 (VTSV…RPTA), 757–783 (RFTTVQPPAGVTTTSPTEDSSVELPTP), 802–854 (LITT…VEIT), and 902–1014 (APPA…GVPE). The span at 514 to 526 (GSHSISVEQTTAV) shows a compositional bias: polar residues. Residues 548–560 (SASESETETEEEI) show a composition bias toward acidic residues. Composition is skewed to low complexity over residues 564–582 (TTARPPTSRSSSSSEESPS) and 596–632 (TSASSESSGEVVTSEEYTTVPHFEVSGSKSESGSEEV). Positions 757-775 (RFTTVQPPAGVTTTSPTED) are enriched in polar residues. The segment covering 811 to 820 (THHHHHHHPH) has biased composition (basic residues). Pro residues-rich tracts occupy residues 904–922 (PATPAPVPPATTTPPPSPP) and 930–955 (TLPPTLPPVTLPPVTQPPPTIPPTPP). Residues 1018 to 1054 (GDVDCIKLGCYNGGTCVTTSEGSRCVCRFDRQGPLCE) form the EGF-like 8 domain. Cystine bridges form between Cys1022–Cys1033, Cys1027–Cys1042, and Cys1044–Cys1053. Residues 1059–1266 (IRNAAFSGDS…GITECGSLAC (208 aa)) form the Laminin G-like 1 domain. N-linked (GlcNAc...) asparagine glycosylation is found at Asn1165, Asn1170, and Asn1176. The 38-residue stretch at 1309–1346 (EISVCEDNPCQYGGTCVQFPGSGYLCLCPLGKHGHYCE) folds into the EGF-like 9 domain. 3 disulfides stabilise this stretch: Cys1313–Cys1324, Cys1318–Cys1334, and Cys1336–Cys1345. Residues 1353-1549 (LPSFSGSVNG…GVGQCGTREC (197 aa)) enclose the Laminin G-like 2 domain. N-linked (GlcNAc...) asparagine glycosylation occurs at Asn1471. EGF-like domains are found at residues 1545–1581 (GTRECHRHACQHDGACLQHGATFTCICQEGWYGPLCA) and 1583–1621 (PTNPCDSFNNKCYEDATCVPLVNGYECDCPVGRTGKNCE). 6 cysteine pairs are disulfide-bonded: Cys1549–Cys1560, Cys1554–Cys1569, Cys1571–Cys1580, Cys1587–Cys1600, Cys1594–Cys1609, and Cys1611–Cys1620. Residues Asn1665 and Asn1861 are each glycosylated (N-linked (GlcNAc...) asparagine). In terms of domain architecture, Laminin G-like 3 spans 1692–1879 (EKQRSFSPVP…NIRDCDGTAC (188 aa)). 2 consecutive EGF-like domains span residues 1875–1912 (DGTACGGDSCESGGHCWLDEKLQPHCICPEYAKGDRCE) and 1913–1946 (YSETCKLIPCKNNGRCLRSGRCSCPNGWGGFYCE). Cystine bridges form between Cys1879–Cys1890, Cys1884–Cys1900, Cys1902–Cys1911, Cys1917–Cys1928, Cys1922–Cys1934, and Cys1936–Cys1945. A Laminin G-like 4 domain is found at 1952–2166 (PTTPSFRGNS…TYQGENIGSC (215 aa)). N-linked (GlcNAc...) asparagine glycans are attached at residues Asn1994, Asn2035, and Asn2099. A disordered region spans residues 2080–2101 (GGRSLGSTTPRSTLAGRRKNSS).

This sequence belongs to the EYS family. In terms of tissue distribution, expressed from the beginning of rhabdomere biogenesis (48 hours after pupal formation), when it decorates the entire photoreceptor apical surface.

The protein localises to the membrane. The protein resides in the secreted. In terms of biological role, essential for the formation of matrix-filled interrhabdomeral space: critical for the formation of epithelial lumina in the retina. Acts together with prominin (prom) and the cell adhesion molecule chaoptin (chp) to choreograph the partitioning of rhabdomeres into an open system. The polypeptide is Protein eyes shut (Drosophila melanogaster (Fruit fly)).